The following is a 260-amino-acid chain: Hydroxypyruvate/pyruvate aldolase Bphyt_0320 (260 aa).

His-48 serves as the catalytic Proton acceptor. A divalent metal cation-binding residues include Glu-157 and Asp-183.

Belongs to the HpcH/HpaI aldolase family. Mn(2+) is required as a cofactor. Requires Mg(2+) as cofactor. Co(2+) serves as cofactor.

The catalysed reaction is D-glyceraldehyde + 3-hydroxypyruvate = 2-dehydro-D-gluconate. It carries out the reaction D-glyceraldehyde + pyruvate = 2-dehydro-3-deoxy-L-galactonate. It catalyses the reaction 2-dehydro-3-deoxy-D-gluconate = D-glyceraldehyde + pyruvate. Its function is as follows. Aldolase which can catalyze in vitro the aldolisation reaction between hydroxypyruvate (HPA) or pyruvate (PA) and D-glyceraldehyde (D-GA). The condensation of hydroxypyruvate and D-glyceraldehyde produces 2-dehydro-D-gluconate. The condensation of pyruvate and D-glyceraldehyde produces 2-dehydro-3-deoxy-L-galactonate as the major product and 2-dehydro-3-deoxy-D-gluconate. Also catalyzes the retro-aldol type decarboxylation of oxaloacetate, a general property of known pyruvate aldolases. This is Hydroxypyruvate/pyruvate aldolase Bphyt_0320 from Paraburkholderia phytofirmans (strain DSM 17436 / LMG 22146 / PsJN) (Burkholderia phytofirmans).